The chain runs to 28 residues: Sarcolamban A (28 aa).

Residues 7–27 traverse the membrane as a helical segment; it reads LFTTFGILAILLFFLYLIYAV.

In terms of assembly, interacts with SERCA. Strongly expressed in embryonic and larval somatic muscles and postembryonic heart.

It is found in the sarcoplasmic reticulum membrane. The protein localises to the cell membrane. It localises to the sarcolemma. The protein resides in the T-tubule. In terms of biological role, plays an essential role in the regulation of calcium transport at the sarcoplasmic reticulum (SR), which is secondarily required for regular muscle contraction. The protein is Sarcolamban A of Drosophila melanogaster (Fruit fly).